Here is a 353-residue protein sequence, read N- to C-terminus: MAMTLLEDWCRGMDVNSQRALLVWGIPVNCDETEIEETLQAAMPQVSYRVLGRMFWREENAKAALLELTGTVDYSLIPREMPGKGGLWKVVFKPPTSDAEFLERLHLFLAREGWTVQDVARVLGFQNPAPAPGPEMPAEMLNYILDNVIQPLVESIWYKKLTLFSGRDIPGPGEETFDSWLEHSNEVIEEWQVSDIEKRRRLMESLRGPAADVIRILKTNNPAITTAECLKALEQVFGSVESSRDAQVRFLNTYQNPGEKLSSYVIRLEPLLQKVVDKGAIDKDNVNQARLEQVIAGANHSGALRRQLWLTGATEGPAPNLFQLLVQIREEEAKEEEEEAEAALLQLGLEGHF.

This sequence belongs to the PNMA family. Testis and brain specific.

The protein resides in the nucleus. Its subcellular location is the nucleolus. The chain is Paraneoplastic antigen Ma1 homolog (Pnma1) from Rattus norvegicus (Rat).